The primary structure comprises 297 residues: UBX domain-containing protein 1 (297 aa).

Alanine 2 carries the post-translational modification N-acetylalanine. The UBA domain maps to 2 to 42; it reads AELTALESLIEMGFPRGRAEKALALTGNQGIEAAMDWLMEH. The tract at residues 38–214 is disordered; it reads WLMEHEDDPD…PPTKREYDQC (177 aa). Positions 42–52 are enriched in acidic residues; it reads HEDDPDVDEPL. Residues 43-297 are interaction with BRCA1; the sequence is EDDPDVDEPL…VLIVAKKCPS (255 aa). Composition is skewed to basic and acidic residues over residues 86–122 and 137–177; these read LTEE…EREK and KLQE…ERAK. Serine 199 is subject to Phosphoserine. Phosphoserine; by MAPK12 is present on serine 200. Residues threonine 207 and threonine 229 each carry the phosphothreonine modification. In terms of domain architecture, UBX spans 209–291; the sequence is REYDQCRIQV…GLVPSAVLIV (83 aa). A Phosphoserine modification is found at serine 270.

Interacts with MAVS; this interaction prevents MAVS oligomerization and thus disrupts the RLR signaling pathway. Interacts with CUL1; this interaction inhibits CUL1-mediated degradation of NF-kappa-B inhibitors. Interacts with BIRC2/c-IAP1; this interaction prevents TNFalpha-stimulated RIP1 ubiquitination and subsequent NF-kappa-B activation. Component of a complex required to couple retrotranslocation, ubiquitination and deglycosylation composed of NGLY1, SAKS1, AMFR, VCP and RAD23B. Interacts with HOMER2. Interacts directly with VCP. Interacts with BRCA1 and BARD1; interaction takes place when BRCA1 is not autoubiquitinated but is strongly enhanced in the presence of autoubiquitinated BRCA1.

Its subcellular location is the cytoplasm. Its function is as follows. Ubiquitin-binding protein that plays a role in the modulation of innate immune response. Blocks both the RIG-I-like receptors (RLR) and NF-kappa-B pathways. Following viral infection, UBXN1 is induced and recruited to the RLR component MAVS. In turn, interferes with MAVS oligomerization, and disrupts the MAVS/TRAF3/TRAF6 signalosome. This function probably serves as a brake to prevent excessive RLR signaling. Interferes with the TNFalpha-triggered NF-kappa-B pathway by interacting with cellular inhibitors of apoptosis proteins (cIAPs) and thereby inhibiting their recruitment to TNFR1. Also prevents the activation of NF-kappa-B by associating with CUL1 and thus inhibiting NF-kappa-B inhibitor alpha/NFKBIA degradation that remains bound to NF-kappa-B. Interacts with the BRCA1-BARD1 heterodimer and regulates its activity. Specifically binds 'Lys-6'-linked polyubiquitin chains. Interaction with autoubiquitinated BRCA1 leads to the inhibition of the E3 ubiquitin-protein ligase activity of the BRCA1-BARD1 heterodimer. Component of a complex required to couple deglycosylation and proteasome-mediated degradation of misfolded proteins in the endoplasmic reticulum that are retrotranslocated in the cytosol. This Mus musculus (Mouse) protein is UBX domain-containing protein 1 (Ubxn1).